The primary structure comprises 415 residues: Phakinin (415 aa).

Positions 1 to 26 (MSTRRVVVDAPAGASSSMPLQRHKAS) are disordered. Serine 2 carries the post-translational modification N-acetylserine. The tract at residues 2-114 (STRRVVVDAP…LGAVEDLGGC (113 aa)) is head. 3 positions are modified to phosphoserine: serine 26, serine 32, and serine 35. Residue threonine 53 is modified to Phosphothreonine. Serine 90 and serine 100 each carry phosphoserine. The region spanning 104–415 (DLGAVEDLGG…HALLDREESS (312 aa)) is the IF rod domain. Coiled coils occupy residues 115–144 (LVEYMAKVHALEKVSQELEAQLRMHLESKA), 199–248 (RKAA…VKML), and 295–395 (QAKQ…LSHK). Residues 396 to 415 (CQLQRDVASYHALLDREESS) form a tail region.

It belongs to the intermediate filament family. Part of a complex required for lens intermediate filament formation composed of BFSP1, BFSP2 and CRYAA. Found in a complex composed of PPL (via C-terminal linker domain), BFSP1 and BFSP2 in the retinal lens. Within the complex interacts with PPL (via C-terminal linker domain) and with BFSP1. Identified in a complex that contains VIM, EZR, AHNAK, BFSP1, BFSP2, ANK2, PLEC, PRX and spectrin. Interacts with LGSN. Interacts with VIM. In terms of tissue distribution, abundantly expressed in both the inner and outer cortex of the retina, expressed at a lower level in the nucleus of the retina (at protein level). Detected in eye lens fiber cells (at protein level).

It localises to the cell membrane. Its subcellular location is the cytoplasm. The protein localises to the cytoskeleton. It is found in the cell cortex. Required for the correct formation of lens intermediate filaments as part of a complex composed of BFSP1, BFSP2 and CRYAA. Plays a role in maintenance of retinal lens optical clarity. This Bos taurus (Bovine) protein is Phakinin (BFSP2).